The following is a 458-amino-acid chain: Alpha-1,3/1,6-mannosyltransferase ALG2 (458 aa).

2 N-linked (GlcNAc...) asparagine glycosylation sites follow: Asn57 and Asn169. A helical transmembrane segment spans residues 438–458; that stretch reads NISIIYVVSIIFAVLLKVFVF.

Belongs to the glycosyltransferase group 1 family.

It is found in the endoplasmic reticulum membrane. The enzyme catalyses a beta-D-Man-(1-&gt;4)-beta-D-GlcNAc-(1-&gt;4)-alpha-D-GlcNAc-diphospho-di-trans,poly-cis-dolichol + GDP-alpha-D-mannose = an alpha-D-Man-(1-&gt;3)-beta-D-Man-(1-&gt;4)-beta-D-GlcNAc-(1-&gt;4)-alpha-D-GlcNAc-diphospho-di-trans,poly-cis-dolichol + GDP + H(+). The catalysed reaction is an alpha-D-Man-(1-&gt;3)-beta-D-Man-(1-&gt;4)-beta-D-GlcNAc-(1-&gt;4)-alpha-D-GlcNAc-diphospho-di-trans,poly-cis-dolichol + GDP-alpha-D-mannose = an alpha-D-Man-(1-&gt;3)-[alpha-D-Man-(1-&gt;6)]-beta-D-Man-(1-&gt;4)-beta-D-GlcNAc-(1-&gt;4)-alpha-D-GlcNAc-diphospho-di-trans,poly-cis-dolichol + GDP + H(+). Its pathway is protein modification; protein glycosylation. In terms of biological role, mannosylates Man(2)GlcNAc(2)-dolichol diphosphate and Man(1)GlcNAc(2)-dolichol diphosphate to form Man(3)GlcNAc(2)-dolichol diphosphate. This Candida glabrata (strain ATCC 2001 / BCRC 20586 / JCM 3761 / NBRC 0622 / NRRL Y-65 / CBS 138) (Yeast) protein is Alpha-1,3/1,6-mannosyltransferase ALG2 (ALG2).